We begin with the raw amino-acid sequence, 486 residues long: Ammonium transporter 2 member 1 (486 aa).

Transmembrane regions (helical) follow at residues 29–49 (ASTL…GSIV), 57–77 (SAFM…LVGF), 127–147 (LVLF…GSVL), 161–181 (LWLL…GFLY), 190–210 (GGYV…YWVG), 225–245 (ILLM…FNGG), 252–272 (IAAS…LLMW), 285–305 (VIGA…GAGL), 309–329 (WAAV…MMIL), 343–363 (LAVF…TGLL), and 399–419 (FVIA…GLFI). Residues 454 to 470 (RHDLSRGGGGGDRDGPA) show a composition bias toward basic and acidic residues. Residues 454 to 473 (RHDLSRGGGGGDRDGPAGER) are disordered.

It belongs to the ammonia transporter channel (TC 1.A.11.2) family. In terms of tissue distribution, expressed in roots and leaf blades and sheaths.

Its subcellular location is the cell membrane. Involved in ammonium transport. The chain is Ammonium transporter 2 member 1 (AMT2-1) from Oryza sativa subsp. japonica (Rice).